Consider the following 389-residue polypeptide: Large envelope protein (389 aa).

The residue at position 1 (Met1) is an N-acetylmethionine. Gly2 carries the N-myristoyl glycine; by host lipid modification. The interval 2–108 is pre-S1; the sequence is GTNLSVPNPL…PPLRDSHPQA (107 aa). The tract at residues 2-163 is pre-S; it reads GTNLSVPNPL…SSRTGDPALN (162 aa). Topologically, residues 2–170 are virion surface; in external conformation; that stretch reads GTNLSVPNPL…ALNMENITSG (169 aa). The Intravirion; in internal conformation portion of the chain corresponds to 2 to 242; that stretch reads GTNLSVPNPL…PGYRWMCLRR (241 aa). Positions 79-103 are disordered; that stretch reads TVPPTASTNRQSGRQPTPISPPLRD. Residues 84 to 95 show a composition bias toward polar residues; that stretch reads ASTNRQSGRQPT. The interval 109–163 is pre-S2; the sequence is MQWNSTALHQALQDPRVRGLYFPAGGSSSGTLNPVPNTASHISSISSRTGDPALN. Residues 171–191 traverse the membrane as a helical segment; that stretch reads FLGPLLVLQAGFFLLTRILTI. At 192–242 the chain is on the intravirion; in external conformation side; the sequence is PQSLDSWWTSLNFLGGSPVCLGQNSQYPTSNHSPTSCPPICPGYRWMCLRR. The helical transmembrane segment at 243-263 threads the bilayer; the sequence is FIIFLFILLLCLIFLLVLLDY. At 264–337 the chain is on the virion surface side; that stretch reads QGMLPVCPLI…WASVRFSWLS (74 aa). N-linked (GlcNAc...) asparagine; by host glycosylation is present at Asn309. Residues 338–358 form a helical membrane-spanning segment; sequence LLVPFVQWFVGLSPTVWLSVI. Residues 359–364 lie on the Intravirion side of the membrane; sequence WMMWYW. The helical transmembrane segment at 365-387 threads the bilayer; it reads GPSLYNIVSPFIPLLPIFFCLWV. The Virion surface portion of the chain corresponds to 388–389; that stretch reads YI.

It belongs to the orthohepadnavirus major surface antigen family. In its internal form (Li-HBsAg), interacts with the capsid protein and with the isoform S. Interacts with host chaperone CANX. In terms of assembly, associates with host chaperone CANX through its pre-S2 N glycan; this association may be essential for isoform M proper secretion. As to quaternary structure, interacts with isoform L. Interacts with the antigens of satellite virus HDV (HDVAgs); this interaction is required for encapsidation of HDV genomic RNA. Isoform M is N-terminally acetylated by host at a ratio of 90%, and N-glycosylated by host at the pre-S2 region. Post-translationally, myristoylated.

The protein resides in the virion membrane. In terms of biological role, the large envelope protein exists in two topological conformations, one which is termed 'external' or Le-HBsAg and the other 'internal' or Li-HBsAg. In its external conformation the protein attaches the virus to cell receptors and thereby initiating infection. This interaction determines the species specificity and liver tropism. This attachment induces virion internalization predominantly through caveolin-mediated endocytosis. The large envelope protein also assures fusion between virion membrane and endosomal membrane. In its internal conformation the protein plays a role in virion morphogenesis and mediates the contact with the nucleocapsid like a matrix protein. Its function is as follows. The middle envelope protein plays an important role in the budding of the virion. It is involved in the induction of budding in a nucleocapsid independent way. In this process the majority of envelope proteins bud to form subviral lipoprotein particles of 22 nm of diameter that do not contain a nucleocapsid. The protein is Large envelope protein of Hepatitis B virus genotype A1 subtype adw2 (isolate South Africa/84/2001) (HBV-A).